Reading from the N-terminus, the 131-residue chain is MATFQVAVADPESGRTYQFEVDGQDANRFIGREIGAAVDGGAVGLDGYTVEITGGSDDAGRPMREDVDGSDLMEVLLEGGAGFNPDEDGERKRVTVRGKEVSEAVAQLNVAIDEHGEEPVAELLGADGDDE.

The protein belongs to the eukaryotic ribosomal protein eS6 family.

This Halobacterium salinarum (strain ATCC 29341 / DSM 671 / R1) protein is Small ribosomal subunit protein eS6.